We begin with the raw amino-acid sequence, 423 residues long: ATP-dependent Clp protease ATP-binding subunit ClpX (423 aa).

The ClpX-type ZB domain maps to 1–50 (MTDDTEYRCSFCGKEHHQVDDLIAGPDVRICSECVVLSCEIVEDRRNEAL). Positions 9, 12, 31, and 34 each coordinate Zn(2+). 126–133 (PTGCGKTY) contacts ATP.

It belongs to the ClpX chaperone family. In terms of assembly, component of the ClpX-ClpP complex. Forms a hexameric ring that, in the presence of ATP, binds to fourteen ClpP subunits assembled into a disk-like structure with a central cavity, resembling the structure of eukaryotic proteasomes.

Its function is as follows. ATP-dependent specificity component of the Clp protease. It directs the protease to specific substrates. Can perform chaperone functions in the absence of ClpP. In Tropheryma whipplei (strain TW08/27) (Whipple's bacillus), this protein is ATP-dependent Clp protease ATP-binding subunit ClpX.